A 432-amino-acid chain; its full sequence is Serine/threonine-protein kinase CDG1 (432 aa).

2 S-palmitoyl cysteine lipidation sites follow: cysteine 4 and cysteine 6. The span at leucine 15–isoleucine 24 shows a compositional bias: basic residues. The disordered stretch occupies residues leucine 15–serine 47. Over residues arginine 25–proline 35 the composition is skewed to polar residues. Residues serine 44 and serine 47 each carry the phosphoserine modification. The Protein kinase domain occupies phenylalanine 74–isoleucine 354. ATP contacts are provided by residues isoleucine 80 to valine 88 and lysine 102. Tyrosine 147 bears the Phosphotyrosine mark. The Proton acceptor role is filled by aspartate 200. 2 positions are modified to phosphoserine: serine 204 and serine 234. Phosphothreonine is present on residues threonine 235 and threonine 240. Phosphotyrosine is present on tyrosine 248.

Belongs to the protein kinase superfamily. Ser/Thr protein kinase family. Interacts with BSU1, BSL1 and BRI1. Phosphorylated at Ser-44, Ser-47 and Ser-234 by BRI1. As to expression, expressed at high levels in the stamen and pollen grains. Expressed at a very low level in vegetative tissues.

It localises to the cell membrane. It catalyses the reaction L-seryl-[protein] + ATP = O-phospho-L-seryl-[protein] + ADP + H(+). The catalysed reaction is L-threonyl-[protein] + ATP = O-phospho-L-threonyl-[protein] + ADP + H(+). With respect to regulation, activated by phosphorylation at Ser-234. In terms of biological role, serine/threonine-protein kinase involved in the positive regulation of brassinosteroid (BR) signaling and plant growth. Mediates BR signal transduction from BRI1 receptor kinase to BSU1 phosphatase. After activation by phosphorylation at Ser-234 by BRI1, CDG1 phosphorylates BSU1 at 'Ser-764' in the phosphatase domain, increasing the ability of BSU1 to inactivate the negative regulator of BR signaling ASK7/BIN2 by dephosphorylation at 'Tyr-200'. The full kinase activity of CDG1 is required for its biological function. The chain is Serine/threonine-protein kinase CDG1 from Arabidopsis thaliana (Mouse-ear cress).